We begin with the raw amino-acid sequence, 160 residues long: Invasion protein IagB (160 aa).

The N-terminal stretch at 1-19 (MHYFFIIVIWLLSINTAWA) is a signal peptide.

The protein belongs to the IagB/IpgF/P19 family.

The polypeptide is Invasion protein IagB (iagB) (Salmonella typhi).